The following is a 433-amino-acid chain: Trigger factor (433 aa).

A PPIase FKBP-type domain is found at 163–248; that stretch reads GDTVNIDFSG…VNEIKFKEVP (86 aa).

Belongs to the FKBP-type PPIase family. Tig subfamily.

Its subcellular location is the cytoplasm. It carries out the reaction [protein]-peptidylproline (omega=180) = [protein]-peptidylproline (omega=0). Its function is as follows. Involved in protein export. Acts as a chaperone by maintaining the newly synthesized protein in an open conformation. Functions as a peptidyl-prolyl cis-trans isomerase. In Staphylococcus aureus (strain bovine RF122 / ET3-1), this protein is Trigger factor.